The sequence spans 475 residues: Fez family zinc finger protein 1 (475 aa).

The Engrailed homology 1 repressor motif lies at proline 28–proline 43. C2H2-type zinc fingers lie at residues phenylalanine 260–histidine 282, phenylalanine 288–histidine 310, histidine 316–histidine 338, phenylalanine 344–histidine 366, phenylalanine 372–histidine 394, and phenylalanine 400–histidine 423. A disordered region spans residues serine 425–glutamine 475. Residues leucine 427–proline 437 are compositionally biased toward polar residues. Pro residues predominate over residues serine 439 to leucine 466.

Belongs to the krueppel C2H2-type zinc-finger protein family.

Its subcellular location is the nucleus. Functionally, transcription repressor. Involved in the axonal projection and proper termination of olfactory sensory neurons (OSN). Plays a role in rostro-caudal patterning of the diencephalon and in prethalamic formation. Expression is required in OSN to cell-autonomously regulate OSN axon projections. Regulates non-cell-autonomously the layer formation of the olfactory bulb development and the interneurons. May be required for correct rostral migration of the interneuron progenitors. The chain is Fez family zinc finger protein 1 (Fezf1) from Mus musculus (Mouse).